We begin with the raw amino-acid sequence, 557 residues long: Predicted GPI-anchored protein 17 (557 aa).

An N-terminal signal peptide occupies residues 1–19 (MKFSTVFTAIFALGTAVSA). N-linked (GlcNAc...) asparagine glycosylation is found at Asn-62, Asn-116, Asn-284, and Asn-309. Residues 320-355 (LRKREYNDAVEAALRDIQKREEGIDDVEIALRKMKR) adopt a coiled-coil conformation. Asn-376, Asn-471, and Asn-520 each carry an N-linked (GlcNAc...) asparagine glycan. Residue Asn-533 is the site of GPI-anchor amidated asparagine attachment. The propeptide at 534–557 (AGSSYGPGFYSTIFAVFGLFAMMI) is removed in mature form.

In terms of processing, substrate for cleavage by KEX2 in vitro.

It is found in the cell membrane. Functionally, predicted GPI-anchored protein which may have a role during host infection. The chain is Predicted GPI-anchored protein 17 (PGA17) from Candida albicans (strain SC5314 / ATCC MYA-2876) (Yeast).